The chain runs to 262 residues: Acyl-[acyl-carrier-protein]--UDP-N-acetylglucosamine O-acyltransferase (262 aa).

It belongs to the transferase hexapeptide repeat family. LpxA subfamily. In terms of assembly, homotrimer.

It localises to the cytoplasm. It catalyses the reaction a (3R)-hydroxyacyl-[ACP] + UDP-N-acetyl-alpha-D-glucosamine = a UDP-3-O-[(3R)-3-hydroxyacyl]-N-acetyl-alpha-D-glucosamine + holo-[ACP]. Its pathway is glycolipid biosynthesis; lipid IV(A) biosynthesis; lipid IV(A) from (3R)-3-hydroxytetradecanoyl-[acyl-carrier-protein] and UDP-N-acetyl-alpha-D-glucosamine: step 1/6. Functionally, involved in the biosynthesis of lipid A, a phosphorylated glycolipid that anchors the lipopolysaccharide to the outer membrane of the cell. The polypeptide is Acyl-[acyl-carrier-protein]--UDP-N-acetylglucosamine O-acyltransferase (Burkholderia thailandensis (strain ATCC 700388 / DSM 13276 / CCUG 48851 / CIP 106301 / E264)).